The following is a 154-amino-acid chain: 6,7-dimethyl-8-ribityllumazine synthase (154 aa).

5-amino-6-(D-ribitylamino)uracil contacts are provided by residues Phe-23, 57–59 (AFE), and 81–83 (AVI). (2S)-2-hydroxy-3-oxobutyl phosphate is bound at residue 86–87 (ST). The Proton donor role is filled by His-89. Residue Phe-114 participates in 5-amino-6-(D-ribitylamino)uracil binding. Arg-128 provides a ligand contact to (2S)-2-hydroxy-3-oxobutyl phosphate.

Belongs to the DMRL synthase family.

The enzyme catalyses (2S)-2-hydroxy-3-oxobutyl phosphate + 5-amino-6-(D-ribitylamino)uracil = 6,7-dimethyl-8-(1-D-ribityl)lumazine + phosphate + 2 H2O + H(+). The protein operates within cofactor biosynthesis; riboflavin biosynthesis; riboflavin from 2-hydroxy-3-oxobutyl phosphate and 5-amino-6-(D-ribitylamino)uracil: step 1/2. Its function is as follows. Catalyzes the formation of 6,7-dimethyl-8-ribityllumazine by condensation of 5-amino-6-(D-ribitylamino)uracil with 3,4-dihydroxy-2-butanone 4-phosphate. This is the penultimate step in the biosynthesis of riboflavin. The sequence is that of 6,7-dimethyl-8-ribityllumazine synthase from Syntrophotalea carbinolica (strain DSM 2380 / NBRC 103641 / GraBd1) (Pelobacter carbinolicus).